The sequence spans 351 residues: Autoinducer 2 import system permease protein LsrC (351 aa).

9 consecutive transmembrane segments (helical) span residues Leu-14–Leu-34, Met-39–Leu-59, Ile-70–Ala-90, Leu-93–Leu-113, Ile-115–Leu-135, Ile-155–Trp-175, Met-213–Pro-233, Gly-252–Leu-272, and Leu-284–Asp-304.

This sequence belongs to the binding-protein-dependent transport system permease family. AraH/RbsC subfamily. The complex is composed of two ATP-binding proteins (LsrA), two transmembrane proteins (LsrC and LsrD) and a solute-binding protein (LsrB).

The protein localises to the cell inner membrane. Functionally, part of the ABC transporter complex LsrABCD involved in autoinducer 2 (AI-2) import. Probably responsible for the translocation of the substrate across the membrane. This is Autoinducer 2 import system permease protein LsrC (lsrC) from Yersinia pseudotuberculosis serotype O:3 (strain YPIII).